The chain runs to 411 residues: Carbohydrate sulfotransferase 1 (411 aa).

At 1-2 the chain is on the cytoplasmic side; the sequence is MQ. A helical; Signal-anchor for type II membrane protein membrane pass occupies residues 3–23; it reads CSWKAVLLLALASIAIQYTAI. Over 24-411 the chain is Lumenal; sequence RTFTAKSFHT…VEERDFRPFL (388 aa). Asn56 carries an N-linked (GlcNAc...) asparagine glycan. 3'-phosphoadenylyl sulfate is bound at residue 69–75; the sequence is TRSGSSF. Residues Asn145 and Asn189 are each glycosylated (N-linked (GlcNAc...) asparagine). 234–242 is a binding site for 3'-phosphoadenylyl sulfate; the sequence is RDPRGILAS. Asn334 carries an N-linked (GlcNAc...) asparagine glycan. The short motif at 337-339 is the Cell attachment site element; that stretch reads RGD.

It belongs to the sulfotransferase 1 family. Gal/GlcNAc/GalNAc subfamily. As to expression, broadly expressed with highest levels in central nervous system. Expressed in cortex (at protein level). Expressed in high endothelial venules in peripheral lymph nodes, mesenteric lymph nodes and Peyer's patches.

It localises to the golgi apparatus membrane. The enzyme catalyses 3'-phosphoadenylyl sulfate + keratan = adenosine 3',5'-bisphosphate + keratan 6'-sulfate.. The protein operates within glycan metabolism. In terms of biological role, sulfotransferase that utilizes 3'-phospho-5'-adenylyl sulfate (PAPS) as sulfonate donor to catalyze the transfer of sulfate to position 6 of internal galactose (Gal) residues of keratan. Cooperates with B4GALT4 and B3GNT7 glycosyltransferases and CHST6 sulfotransferase to construct and elongate disulfated disaccharide unit [-&gt;3(6-sulfoGalbeta)1-&gt;4(6-sulfoGlcNAcbeta)1-&gt;] within keratan sulfate polymer. Has a preference for sulfating keratan sulfate, but it also transfers sulfate to the unsulfated polymer. Involved in biosynthesis of phosphacan, a major keratan sulfate proteoglycan in the developing brain. Involved in biosynthesis of 6-sulfoGalbeta-containing O-linked glycans in high endothelial venules of lymph nodes. May act in a synergistic manner with CHST4 to generate sialyl 6',6-disulfo Lewis X motif, a recognition determinant for immune cell receptors implicated in leukocyte trafficking. Catalyzes sulfation of N-acetyllactosamine (LacNAc) oligosaccharides with highest efficiency for sialylated LacNAc structures. This Mus musculus (Mouse) protein is Carbohydrate sulfotransferase 1 (Chst1).